A 168-amino-acid polypeptide reads, in one-letter code: G/U mismatch-specific DNA glycosylase (168 aa).

It belongs to the uracil-DNA glycosylase (UDG) superfamily. TDG/mug family. As to quaternary structure, binds DNA as a monomer.

It localises to the cytoplasm. The enzyme catalyses Specifically hydrolyzes mismatched double-stranded DNA and polynucleotides, releasing free uracil.. Functionally, excises ethenocytosine and uracil, which can arise by alkylation or deamination of cytosine, respectively, from the corresponding mispairs with guanine in ds-DNA. It is capable of hydrolyzing the carbon-nitrogen bond between the sugar-phosphate backbone of the DNA and the mispaired base. The complementary strand guanine functions in substrate recognition. Required for DNA damage lesion repair in stationary-phase cells. The chain is G/U mismatch-specific DNA glycosylase from Escherichia coli (strain SMS-3-5 / SECEC).